Consider the following 222-residue polypeptide: MARSPVLIINCKNYKEAAGGRIDSLAAAAAGAAAKYGVRIALAPPQHLLGAVKGEDLTVLAQHIDDKGVGSTTGYVVPELLGESGVSGALINHSEHRVSADQVASLVPRLRGLDMISVVCVKDSAEAANLSRHRPDYIAIEPPELIGSGRSVSSERPELIGEAAEAIRGADGTKLLCGAGITSGADVRKALELGSKGILVASGVVKSSDPAAAIAELAQAMS.

Asn10–Lys12 contacts substrate. Catalysis depends on His93, which acts as the Electrophile. Catalysis depends on Glu141, which acts as the Proton acceptor. Residues Ile146, Gly180, and Ala201 to Ser202 each bind substrate.

The protein belongs to the triosephosphate isomerase family. Homotetramer; dimer of dimers.

The protein localises to the cytoplasm. The catalysed reaction is D-glyceraldehyde 3-phosphate = dihydroxyacetone phosphate. The protein operates within carbohydrate biosynthesis; gluconeogenesis. It functions in the pathway carbohydrate degradation; glycolysis; D-glyceraldehyde 3-phosphate from glycerone phosphate: step 1/1. In terms of biological role, involved in the gluconeogenesis. Catalyzes stereospecifically the conversion of dihydroxyacetone phosphate (DHAP) to D-glyceraldehyde-3-phosphate (G3P). This chain is Triosephosphate isomerase, found in Cenarchaeum symbiosum (strain A).